The primary structure comprises 137 residues: NTF2-related export protein (137 aa).

The NTF2 domain occupies E19–Y135.

Preferentially binds Ran-GTP.

The protein localises to the nucleus. Stimulator of protein export for NES-containing proteins. Also plays a role in the nuclear export of U1 snRNA, tRNA, and mRNA. This Caenorhabditis elegans protein is NTF2-related export protein (nxt-1).